Consider the following 432-residue polypeptide: 3-chlorobenzoate-3,4-dioxygenase oxygenase subunit (432 aa).

Positions W27–V133 constitute a Rieske domain. [2Fe-2S] cluster-binding residues include C69, H71, C88, and H91. 2 residues coordinate Fe cation: H180 and H185.

The protein belongs to the bacterial ring-hydroxylating dioxygenase alpha subunit family. As to quaternary structure, this dioxygenase system consists of two proteins: an oxygenase and an oxygenase reductase. [2Fe-2S] cluster serves as cofactor. Requires Fe cation as cofactor.

In Comamonas testosteroni (Pseudomonas testosteroni), this protein is 3-chlorobenzoate-3,4-dioxygenase oxygenase subunit (cbaA).